A 414-amino-acid chain; its full sequence is MIOREX complex component 10 (414 aa).

The transit peptide at 1-29 (MLSFRSLTSTFGFVSRFQIRRLGTSLSIQ) directs the protein to the mitochondrion. Topologically, residues 30–373 (NLEVQDGRWK…ISLLNERNST (344 aa)) are mitochondrial matrix. The chain crosses the membrane as a helical span at residues 374 to 394 (FLEWIIIYLIAFELCFEIYHF). Residues 395 to 414 (YQKYSSYCSEPTNDDLDATK) lie on the Mitochondrial intermembrane side of the membrane.

Belongs to the RMD1/sif2 family. As to quaternary structure, associates with the mitochondrial ribosome.

It is found in the mitochondrion inner membrane. Functionally, component of MIOREX complexes, large expressome-like assemblies of ribosomes with factors involved in all the steps of post-transcriptional gene expression. The sequence is that of MIOREX complex component 10 from Saccharomyces cerevisiae (strain ATCC 204508 / S288c) (Baker's yeast).